A 359-amino-acid chain; its full sequence is Trans-enoyl reductase FSL5 (359 aa).

47 to 50 (IDGK) contacts NADP(+). 134-141 (SGVGTIGL) lines the substrate pocket. NADP(+) is bound by residues 169–172 (STAT), 192–195 (SPHN), Tyr-210, and 257–258 (LE). 277-281 (GPTLL) lines the substrate pocket. 346–347 (VS) lines the NADP(+) pocket.

The protein belongs to the zinc-containing alcohol dehydrogenase family. Monomer.

It functions in the pathway secondary metabolite biosynthesis. Functionally, trans-enoyl reductase; part of the gene cluster that mediates the biosynthesis of fusarielins F, G and H, decaketide compounds with 5 methylations and a decaline core that act as mycoestrogens as they stimulate growth of MCF-7 breast cancer cells. The initial compound in the pathway is produced by the reducing polyketide synthase FSL1. FSL1 lacks an active enoyl reductase (ER) domain and biosynthesis of fusarielins relies on the trans-acting enoyl reductase FSL5, before it is released through hydrolysis catalyzed by the thioesterase FSL2. Fusarielins F, G, and H have a C11=C12 cis double bond and is fully reduced between C10 and C11 and between C12 and C13. FSL3 can be involved in the formation of the C11=C12 cis double bond by moving a hypothetical C10=C11 or C12=C13 trans double bond to form prefusarielin. Prefusarielin is oxygenated at C15 and C16 by the cytochrome P450 monooxygenase FSL4, resulting in fusarielin F, which subsequently is epoxidized into fusarielin G by the same enzyme. The final step in the pathway is a reduction of the carboxylic acid moiety to yield fusarielin H via a still undetermined mechanism. This Gibberella zeae (strain ATCC MYA-4620 / CBS 123657 / FGSC 9075 / NRRL 31084 / PH-1) (Wheat head blight fungus) protein is Trans-enoyl reductase FSL5.